We begin with the raw amino-acid sequence, 921 residues long: MINTAKYFALLESLRFSKALANTANNSGTAEALEINLRILEKYAKLEIGQQLHELCLEYQLTDDHESSIDPDSDRTICYIIRLQHVLHSIMRNINFHSDAKEDLISVAHLKLCIQASQELSYYSLRCQLHEDFYKSPIFCEAQGKIKANFSLMLLSIQFFINLLHIRQYHIANSMELVQRDLLAAIVSLRVQQDSPLLDKAIAYLWQYESKADFFRNILLFKATTLCPTLAQLLHRQLLGKLHLPQGFASLVEALHQNPNVNSSRNAEIVASIVARKGFSQLAQEKMVLQVLEYCKFYLQNADKMCAGVLSLRRLYDLSDTNQKLIKEILFKHWETLCNPEDIINGLILMDHQELCNRILLWQHLFCSSTVACLPSNLLVPYLPLLLQLYDGLPMELPASSQISAIILRCLDNREMKNELPAILQKLFKWEIEKEPPWKCLNPRIIILPSMNTTQIQVKVAHKDHLADHDMGRILPGLLTSSSHHSLTCKVFLSLLGFIAKQINDKSSASVDFISSEAELKDFLHSKYQLKLDLLIALNQMVAHQPLRAQLSQHTKELLHILKDLLVHRSREQDTTDQILLLVLNLLQEILEGSENIQLSEACKELKEQLHLLGTRSSNPLIQQSVKSLLTIIHGAWRPSEAVKIQPFQRARSLIEEKQSHMQVYGIQMMIDLLKKRDPATLAQGQLIIALALTTLKDKESYTFLNCVRLFVSLVHVMESDVLDKLSDEYLSETAHLDYRLVVGEAILKVAQELGPLCFRYKAVLLNCFMYGSRSPVHEFRMSAFANLAQLCRLLAFQVQNFFHELLQLVNSELTTGGYVPSKRAAVLVLAELLNGMENLLDYQEMLLPIYRLLKAIEADESCDPQMRQHAANGLKILNKKCTKLIQSALEEKSLQKQIKVLGIKDDDSPQRRNRHILELN.

Belongs to the Tango6 family.

The protein localises to the cytoplasm. The protein resides in the golgi apparatus. Its function is as follows. May be involved in protein secretion and Golgi organization. The chain is Transport and Golgi organization protein 6 (Tango6) from Drosophila melanogaster (Fruit fly).